The chain runs to 217 residues: N-(5'-phosphoribosyl)anthranilate isomerase (217 aa).

It belongs to the TrpF family.

It catalyses the reaction N-(5-phospho-beta-D-ribosyl)anthranilate = 1-(2-carboxyphenylamino)-1-deoxy-D-ribulose 5-phosphate. It functions in the pathway amino-acid biosynthesis; L-tryptophan biosynthesis; L-tryptophan from chorismate: step 3/5. This Chlorobium chlorochromatii (strain CaD3) protein is N-(5'-phosphoribosyl)anthranilate isomerase.